Consider the following 1913-residue polypeptide: Protein TIC 214 (1913 aa).

5 helical membrane passes run 18–38 (IINS…FSIG), 64–84 (FITG…HLAL), 124–144 (LSIQ…HLML), 172–192 (VGWL…VSWI), and 214–234 (LKSA…VNYL). Disordered regions lie at residues 245–330 (KLNE…ETEE), 707–734 (YTDK…NSDT), and 1605–1652 (EKED…RKKK). The span at 260–289 (KESQKSKESEEERDVEKETTSETKETKQEQ) shows a compositional bias: basic and acidic residues. Residues 303-314 (EKEDPDKIDETE) are compositionally biased toward acidic residues. The span at 315–330 (EIRVNGKEKKKDETEE) shows a compositional bias: basic and acidic residues. A compositionally biased stretch (low complexity) spans 718–729 (PNPNTDNTTTEN).

This sequence belongs to the TIC214 family. Part of the Tic complex.

It localises to the plastid. Its subcellular location is the chloroplast inner membrane. Involved in protein precursor import into chloroplasts. May be part of an intermediate translocation complex acting as a protein-conducting channel at the inner envelope. The protein is Protein TIC 214 of Acorus calamus var. americanus (American sweet flag).